We begin with the raw amino-acid sequence, 432 residues long: D-amino acid dehydrogenase (432 aa).

3 to 17 (VVILGSGVVGVTSAW) provides a ligand contact to FAD.

This sequence belongs to the DadA oxidoreductase family. The cofactor is FAD.

The enzyme catalyses a D-alpha-amino acid + A + H2O = a 2-oxocarboxylate + AH2 + NH4(+). It participates in amino-acid degradation; D-alanine degradation; NH(3) and pyruvate from D-alanine: step 1/1. Functionally, oxidative deamination of D-amino acids. This chain is D-amino acid dehydrogenase, found in Salmonella dublin (strain CT_02021853).